Reading from the N-terminus, the 242-residue chain is Probable inactive serine protease 58 (242 aa).

An N-terminal signal peptide occupies residues 1–17 (MNLILLWALLNLPVALT). A Peptidase S1 domain is found at 18–240 (FDPNYKDDIT…YIPWIENTIQ (223 aa)). 4 disulfide bridges follow: C41–C57, C134–C202, C166–C181, and C192–C216. Residue N157 is glycosylated (N-linked (GlcNAc...) asparagine).

It belongs to the peptidase S1 family.

The protein localises to the secreted. The chain is Probable inactive serine protease 58 (PRSS58) from Bos taurus (Bovine).